The chain runs to 201 residues: UPF0301 protein MSMEG_6921/MSMEI_6732 (201 aa).

This sequence belongs to the UPF0301 (AlgH) family.

This chain is UPF0301 protein MSMEG_6921/MSMEI_6732, found in Mycolicibacterium smegmatis (strain ATCC 700084 / mc(2)155) (Mycobacterium smegmatis).